We begin with the raw amino-acid sequence, 2073 residues long: Non-reducing polyketide synthase cla3 (2073 aa).

The N-terminal acylcarrier protein transacylase domain (SAT) stretch occupies residues 9 to 242 (LLFGDYTEPW…EKLNIHALQH (234 aa)). The region spanning 363-793 (SGRIAIVGMS…GGNGCLLLEE (431 aa)) is the Ketosynthase family 3 (KS3) domain. Catalysis depends on for beta-ketoacyl synthase activity residues cysteine 538, histidine 673, and histidine 712. The malonyl-CoA:ACP transacylase (MAT) domain stretch occupies residues 898–1198 (TFTGQGSQYA…KIMSTLDATG (301 aa)). Residue serine 987 is the For acyl/malonyl transferase activity of the active site. A product template (PT) domain region spans residues 1276–1590 (STCAQYVITE…QNVILERLLG (315 aa)). Residues 1279 to 1420 (AQYVITETKT…AGLESQWEKS (142 aa)) are N-terminal hotdog fold. The 308-residue stretch at 1279–1586 (AQYVITETKT…FHRVQNVILE (308 aa)) folds into the PKS/mFAS DH domain. The active-site Proton acceptor; for dehydratase activity is the histidine 1311. The tract at residues 1439-1586 (QGHRIQRDIY…FHRVQNVILE (148 aa)) is C-terminal hotdog fold. The active-site Proton donor; for dehydratase activity is the aspartate 1500. Residues 1594 to 1637 (SSSVPAQASDPLRSKRSPQEARSLPGEAKTEKPGSTIATTSPVL) are disordered. The Carrier domain maps to 1641–1718 (KSEQGMFQAL…NLRCAFDEDV (78 aa)). Serine 1678 bears the O-(pantetheine 4'-phosphoryl)serine mark. Residues 1721-1738 (EFTDSEVTSGTPNSSESV) are compositionally biased toward polar residues. The disordered stretch occupies residues 1721 to 1786 (EFTDSEVTSG…GVLDDGSPQP (66 aa)). Residues 1747–1774 (PEEHAFKEPKDDSPLARRDMDNSNDRSL) show a composition bias toward basic and acidic residues. Residues 1805–1950 (FLIADGSGSI…MQQHLRAIFK (146 aa)) are thioesterase (TE) domain. The For thioesterase activity role is filled by histidine 2058.

The protein operates within secondary metabolite biosynthesis. In terms of biological role, highly reducing polyketide synthase; part of the gene cluster that mediates the biosynthesis of cladosporin, a tricyclic octaketide that acts as an antimalarial agent though inhibition of the Plasmodium falciparum lysyl-tRNA synthetase. The highly reducing polyketide synthase cla2 is responsible for biosynthesis up to the pentaketide stage, including of the tetrahydropyran (THP) ring, whereas the three subsequent ketide extensions with no reduction are catalyzed by the non-reducing polyketide synthase cla3. This Cladosporium cladosporioides protein is Non-reducing polyketide synthase cla3.